Consider the following 389-residue polypeptide: MELKGRTFLGYRRDNGRVGIRNHVIVLPVDDISNAAAEAVANNIKGTLALPHPYGRLQFGADLDLHFRTLIGTGCNPNVAAVIVIGIEPGWTGKVVDGIRATGKPVEGFWIEQNGDHNTIANASRKAREFVQYASELQREPCDVSELWVSTKCGESDTTSGCGANPTVGEAFDKLYEQGCTLVFGETSELTGGEHLVAARCANDDVRERFQAMFDRYSAMIDRHKTSDLSESQPTKGNIEGGLTTIEEKALGNIQKIGKRCRVDGVLDKAETPTGPGLWFMDSSSAAAEMVTLCAASGYVAHFFPTGQGNVIGNPILPVIKLCANPRTVRTMSEHIDVDVSGVLRREINLQEAGDQLLEMLLRTANGRHTNAEALGHREFVLTRLYESA.

The protein belongs to the UxaA family. In terms of assembly, (2R)-sulfolactate sulfo-lyase is composed of a SuyA and a SuyB subunit.

Its subcellular location is the cytoplasm. The catalysed reaction is (2R)-3-sulfolactate = sulfite + pyruvate + H(+). Functionally, together with SuyA, desulfonates sulfolactate to pyruvate and sulfite. The chain is (2R)-sulfolactate sulfo-lyase subunit beta (suyB) from Chromohalobacter salexigens (strain ATCC BAA-138 / DSM 3043 / CIP 106854 / NCIMB 13768 / 1H11).